The primary structure comprises 869 residues: MEGGKGEGKRMKEEAPSKKLPPKIYGGDAGTPTKAAHDEILSSLLRINNFDSISSIKDESLDIDLSACVTISSASLVNGNSLSSTDFWRVLDESAQNNTELNLSSDVCRDDLAATSSSTVPSTLTSDNHSSSEFSVTFLRPEPPNAFTNSPFKKTSSSGTSTPVKLSPEQLHQQHQLQMPQSQLLQRKPKLPAATAVRLKVFKEEPPEEKHPPEQVVTKVEVCESELLPPSFTIFQQAKSAESVADAASMPPPAASETKPLEVDPAPLHKCLDCNGLLLETPDEVAKHEAAAHRLRLTYRCSECQREFELLAGLKKHLKTHRTEGRKDTWKKCPDCGKCLKLGSMWMHRKIHSDNKKYQCDICGQKFVQKINLTHHARIHSSEKPYECPECQKRFQERSHLQRHQKYHAQTRSYRCEKCGKMYKTERCLKVHNLVHLEQRPFACTVCDKSFISNSKLKQHSNIHTGMRPFKCNYCPRDFTNFPNWLKHTRRRHKVDHKTGEHLENIPSYCSKKSTTNKAQKAAAAAAAAAAASSAVNPNELSASSELKAKANLTSTAAPAPAKQARKKKQPQQATLAALGITLPAGTALQQVHPVPLAQQHQQELTTVLVPLAPPAPKQTKAKRERKQLAPKQLQQKPQLLQQGQPQQSSLEPIPAVPQIKKEPVQTQGPFLDLHGLSLTSAEELIMEQALEMEECGLYDAPNANTEMGTSDNAISDSAAALHFQIKNELPDELLPDDDFLPCKPSDRLPCPSLESSPFSSPASMELTAVSCASSVAISTNALPVRSGNYYLPAFTLNAHGKLSSTGNGVQSVTTSLAQTPSVSMVNVPLLVRSNQMLPSVDTLLFTNQTGGSRFFAGKSATAATPHLT.

Basic and acidic residues predominate over residues 1–17 (MEGGKGEGKRMKEEAPS). Disordered stretches follow at residues 1-32 (MEGG…AGTP) and 134-165 (FSVT…TPVK). Over residues 146-164 (AFTNSPFKKTSSSGTSTPV) the composition is skewed to polar residues. C2H2-type zinc fingers lie at residues 269-293 (HKCL…AAAH), 299-321 (YRCS…LKTH), 331-352 (KKCP…RKIH), 358-380 (YQCD…ARIH), 386-408 (YECP…QKYH), 414-436 (YRCE…NLVH), 442-464 (FACT…SNIH), and 470-493 (FKCN…RRRH). Disordered stretches follow at residues 554–573 (TSTA…QPQQ) and 617–652 (PKQT…SSLE). The span at 630-648 (APKQLQQKPQLLQQGQPQQ) shows a compositional bias: low complexity.

Distribution varies between nurse cells and the oocyte during oogenesis. Weakly expressed in follicle and border cells.

Its subcellular location is the nucleus. Functionally, may belong to a complex set of multifingered proteins which play an important role in gene activation or regulation at early embryonic stages through a maximal accumulation of their transcripts (or protein product) in the mature oocyte. The chain is Serendipity locus protein H-1 (wdn) from Drosophila melanogaster (Fruit fly).